Consider the following 372-residue polypeptide: Glutamate 5-kinase (372 aa).

Position 9 (Lys-9) interacts with ATP. Residues Ser-49, Asp-136, and Asn-148 each coordinate substrate. Residues Thr-168 to Asp-169 and Thr-210 to Lys-216 contribute to the ATP site. In terms of domain architecture, PUA spans Ala-276–Ser-353.

It belongs to the glutamate 5-kinase family.

The protein resides in the cytoplasm. The catalysed reaction is L-glutamate + ATP = L-glutamyl 5-phosphate + ADP. The protein operates within amino-acid biosynthesis; L-proline biosynthesis; L-glutamate 5-semialdehyde from L-glutamate: step 1/2. Its function is as follows. Catalyzes the transfer of a phosphate group to glutamate to form L-glutamate 5-phosphate. The polypeptide is Glutamate 5-kinase (Shouchella clausii (strain KSM-K16) (Alkalihalobacillus clausii)).